Consider the following 355-residue polypeptide: UDP-N-acetylglucosamine--N-acetylmuramyl-(pentapeptide) pyrophosphoryl-undecaprenol N-acetylglucosamine transferase (355 aa).

Residues 15–17, Asn127, Arg163, Ser191, Ile244, 263–268, and Gln288 each bind UDP-N-acetyl-alpha-D-glucosamine; these read TGG and ALTVSE.

This sequence belongs to the glycosyltransferase 28 family. MurG subfamily.

The protein resides in the cell inner membrane. It catalyses the reaction di-trans,octa-cis-undecaprenyl diphospho-N-acetyl-alpha-D-muramoyl-L-alanyl-D-glutamyl-meso-2,6-diaminopimeloyl-D-alanyl-D-alanine + UDP-N-acetyl-alpha-D-glucosamine = di-trans,octa-cis-undecaprenyl diphospho-[N-acetyl-alpha-D-glucosaminyl-(1-&gt;4)]-N-acetyl-alpha-D-muramoyl-L-alanyl-D-glutamyl-meso-2,6-diaminopimeloyl-D-alanyl-D-alanine + UDP + H(+). Its pathway is cell wall biogenesis; peptidoglycan biosynthesis. Its function is as follows. Cell wall formation. Catalyzes the transfer of a GlcNAc subunit on undecaprenyl-pyrophosphoryl-MurNAc-pentapeptide (lipid intermediate I) to form undecaprenyl-pyrophosphoryl-MurNAc-(pentapeptide)GlcNAc (lipid intermediate II). This Escherichia coli O9:H4 (strain HS) protein is UDP-N-acetylglucosamine--N-acetylmuramyl-(pentapeptide) pyrophosphoryl-undecaprenol N-acetylglucosamine transferase.